A 56-amino-acid polypeptide reads, in one-letter code: Small ribosomal subunit protein uS14 (56 aa).

Zn(2+) contacts are provided by Cys21, Cys24, Cys39, and Cys42.

It belongs to the universal ribosomal protein uS14 family. As to quaternary structure, component of the 40S small ribosomal subunit. It depends on Zn(2+) as a cofactor.

The protein localises to the cytoplasm. The protein resides in the cytosol. It localises to the rough endoplasmic reticulum. This is Small ribosomal subunit protein uS14 (RpS29) from Lonomia obliqua (Moth).